The chain runs to 493 residues: Ribosomal protein uS12 methylthiotransferase RimO (493 aa).

One can recognise an MTTase N-terminal domain in the interval 5-121 (RTVALVTLGC…ISDRLQTILN (117 aa)). Positions 14, 50, 84, 198, 202, and 205 each coordinate [4Fe-4S] cluster. The Radical SAM core domain occupies 184–415 (LGTSPVASVK…QLAEELTSQR (232 aa)). The TRAM domain occupies 417–487 (EERVGETLQV…GVDLVAEHHE (71 aa)).

The protein belongs to the methylthiotransferase family. RimO subfamily. It depends on [4Fe-4S] cluster as a cofactor.

It is found in the cytoplasm. The enzyme catalyses L-aspartate(89)-[ribosomal protein uS12]-hydrogen + (sulfur carrier)-SH + AH2 + 2 S-adenosyl-L-methionine = 3-methylsulfanyl-L-aspartate(89)-[ribosomal protein uS12]-hydrogen + (sulfur carrier)-H + 5'-deoxyadenosine + L-methionine + A + S-adenosyl-L-homocysteine + 2 H(+). Its function is as follows. Catalyzes the methylthiolation of an aspartic acid residue of ribosomal protein uS12. This Streptomyces griseus subsp. griseus (strain JCM 4626 / CBS 651.72 / NBRC 13350 / KCC S-0626 / ISP 5235) protein is Ribosomal protein uS12 methylthiotransferase RimO.